Reading from the N-terminus, the 601-residue chain is Elongation factor 4 (601 aa).

A tr-type G domain is found at glutamate 5–glutamate 187. GTP is bound by residues aspartate 17–threonine 22 and asparagine 134–aspartate 137.

Belongs to the TRAFAC class translation factor GTPase superfamily. Classic translation factor GTPase family. LepA subfamily.

It localises to the cell inner membrane. It carries out the reaction GTP + H2O = GDP + phosphate + H(+). In terms of biological role, required for accurate and efficient protein synthesis under certain stress conditions. May act as a fidelity factor of the translation reaction, by catalyzing a one-codon backward translocation of tRNAs on improperly translocated ribosomes. Back-translocation proceeds from a post-translocation (POST) complex to a pre-translocation (PRE) complex, thus giving elongation factor G a second chance to translocate the tRNAs correctly. Binds to ribosomes in a GTP-dependent manner. The polypeptide is Elongation factor 4 (Nitratidesulfovibrio vulgaris (strain ATCC 29579 / DSM 644 / CCUG 34227 / NCIMB 8303 / VKM B-1760 / Hildenborough) (Desulfovibrio vulgaris)).